Consider the following 283-residue polypeptide: Acetyl-coenzyme A carboxylase carboxyl transferase subunit beta (283 aa).

Residues 29–283 (LWISCPKCQQ…VKIHSMKGAF (255 aa)) enclose the CoA carboxyltransferase N-terminal domain. Positions 33, 36, 51, and 54 each coordinate Zn(2+). The C4-type zinc finger occupies 33 to 54 (CPKCQQSIYHKDLGKYKTCPNC).

Belongs to the AccD/PCCB family. As to quaternary structure, acetyl-CoA carboxylase is a heterohexamer composed of biotin carboxyl carrier protein (AccB), biotin carboxylase (AccC) and two subunits each of ACCase subunit alpha (AccA) and ACCase subunit beta (AccD). Zn(2+) is required as a cofactor.

It localises to the cytoplasm. The enzyme catalyses N(6)-carboxybiotinyl-L-lysyl-[protein] + acetyl-CoA = N(6)-biotinyl-L-lysyl-[protein] + malonyl-CoA. It participates in lipid metabolism; malonyl-CoA biosynthesis; malonyl-CoA from acetyl-CoA: step 1/1. Functionally, component of the acetyl coenzyme A carboxylase (ACC) complex. Biotin carboxylase (BC) catalyzes the carboxylation of biotin on its carrier protein (BCCP) and then the CO(2) group is transferred by the transcarboxylase to acetyl-CoA to form malonyl-CoA. The protein is Acetyl-coenzyme A carboxylase carboxyl transferase subunit beta of Ligilactobacillus salivarius (strain UCC118) (Lactobacillus salivarius).